The chain runs to 267 residues: MRRIAVMGAAGRMGKTLIEAVQQTPGAGLTAAIDRPDSSLVGADAGELAALGRIGVLLSDDLAKVADEFDVLIDFTHPSVTLKNLAFCRKHGKAMIIGTTGFTVEEKQLLAEAGKDIPIVFAANFSVGVNLSLKLLDMAARVLGDDVDIEIIEAHHRHKVDAPSGTALRMGEVVANALGRDLQEVAVYGREGQTGARDRKTIGFATVRAGDVVGDHTVLFAAEGERLEITHKASSRMTFAKGAVRAALWLDGREPGLYDMQDVLELR.

Residues 8 to 13 and Asp-34 contribute to the NAD(+) site; that span reads GAAGRM. Arg-35 is a binding site for NADP(+). NAD(+)-binding positions include 98-100 and 122-125; these read GTT and AANF. His-155 acts as the Proton donor/acceptor in catalysis. Position 156 (His-156) interacts with (S)-2,3,4,5-tetrahydrodipicolinate. The active-site Proton donor is Lys-159. 165–166 is a binding site for (S)-2,3,4,5-tetrahydrodipicolinate; it reads GT.

Belongs to the DapB family.

Its subcellular location is the cytoplasm. It carries out the reaction (S)-2,3,4,5-tetrahydrodipicolinate + NAD(+) + H2O = (2S,4S)-4-hydroxy-2,3,4,5-tetrahydrodipicolinate + NADH + H(+). The enzyme catalyses (S)-2,3,4,5-tetrahydrodipicolinate + NADP(+) + H2O = (2S,4S)-4-hydroxy-2,3,4,5-tetrahydrodipicolinate + NADPH + H(+). Its pathway is amino-acid biosynthesis; L-lysine biosynthesis via DAP pathway; (S)-tetrahydrodipicolinate from L-aspartate: step 4/4. In terms of biological role, catalyzes the conversion of 4-hydroxy-tetrahydrodipicolinate (HTPA) to tetrahydrodipicolinate. This is 4-hydroxy-tetrahydrodipicolinate reductase from Pseudomonas putida (strain ATCC 47054 / DSM 6125 / CFBP 8728 / NCIMB 11950 / KT2440).